We begin with the raw amino-acid sequence, 384 residues long: MTKLVSKIFKRLISQSQYMSSSTTSNLPAASQTSNLESQLLSSAPPPAKKKRGSALLWYLVGFTTYGLGETYKFLQTQVEHLDSRKQCLEMKPMKLNTTKDLDGLGFRRVVCKGIFDEQRSIYVGPKPRSMSKSSEIGFYVITPLLPIPNEPNSMKSPILVNRGWVPSDWKENSLESLGTGGLVAAAKESRKANKLLSSQQSLLSKFWYKLNNPMIVEDQVSRAMHVEVVGVVRKSETPGIYTLVNYPSSLAWFYLDVPKLALAMGFGEDTMYIESTYTDMDESRTYPVPRDVENLTRSKDIPLDYHLYTVLWHWSSLTCFIKASSILMRRLTKSDPIGVEPILIPISILVFICTKIYSLRNLFCKIDTIGVGCVTKLDTGKVK.

A run of 3 helical transmembrane segments spans residues 55–75 (ALLWYLVGFTTYGLGETYKFL), 302–322 (IPLDYHLYTVLWHWSSLTCFI), and 338–358 (IGVEPILIPISILVFICTKIY).

The protein belongs to the SURF1 (TC 3.D.4.8) family.

The protein localises to the mitochondrion inner membrane. In terms of biological role, may be involved in the biogenesis of the COX complex. The polypeptide is Surfeit locus protein 1-like (Arabidopsis thaliana (Mouse-ear cress)).